A 354-amino-acid chain; its full sequence is Guanine nucleotide-binding protein alpha-3 subunit (354 aa).

Residue Gly2 is the site of N-myristoyl glycine attachment. Cys4 carries the S-palmitoyl cysteine lipid modification. One can recognise a G-alpha domain in the interval Lys32 to Tyr354. Residues Lys35–Thr48 are G1 motif. GTP contacts are provided by residues Gly40–Ser47, Leu176–Thr182, Asp201–Gln205, Asn270–Asp273, and Ala326. Positions 47 and 182 each coordinate Mg(2+). Residues Asp174–Thr182 are G2 motif. The tract at residues Phe197–Arg206 is G3 motif. A G4 motif region spans residues Ile266–Asp273. The segment at Thr324–Thr329 is G5 motif.

Belongs to the G-alpha family. G(q) subfamily. As to quaternary structure, g proteins are composed of 3 units; alpha, beta and gamma. The alpha chain contains the guanine nucleotide binding site.

Functionally, guanine nucleotide-binding proteins (G proteins) are involved as modulators or transducers in various transmembrane signaling systems. Promotes transcription of 3',5'-cyclic phosphodiesterases pde-1 and pde-5, leading to reduced cGMP levels in sensory neurons. This causes suppression of insulin production and signaling which leads to increased daf-16 activity and contributes to increased adult lifespan and resistance to oxidative stress. In addition, by reducing cGMP levels, inhibits TGF-beta signaling pathways. Involved in behavioral response to P.aeruginosa by controlling the expression of daf-7, a member of the TGF-beta family, in ASJ sensory neurons. The sequence is that of Guanine nucleotide-binding protein alpha-3 subunit (gpa-3) from Caenorhabditis briggsae.